We begin with the raw amino-acid sequence, 533 residues long: Glucose-6-phosphate isomerase (533 aa).

The Proton donor role is filled by E322. Active-site residues include H351 and K455.

Belongs to the GPI family.

The protein resides in the cytoplasm. The enzyme catalyses alpha-D-glucose 6-phosphate = beta-D-fructose 6-phosphate. Its pathway is carbohydrate biosynthesis; gluconeogenesis. The protein operates within carbohydrate degradation; glycolysis; D-glyceraldehyde 3-phosphate and glycerone phosphate from D-glucose: step 2/4. Its function is as follows. Catalyzes the reversible isomerization of glucose-6-phosphate to fructose-6-phosphate. This Desulfitobacterium hafniense (strain DSM 10664 / DCB-2) protein is Glucose-6-phosphate isomerase.